A 216-amino-acid polypeptide reads, in one-letter code: MPTPHEAEKQHTGPEEADRPPSMSSHDAAPSGPPSRNPCCLCWCCCCSCSWNQERQRAWQVSRESKLQPLPSCEVCTPPSPEEVQSWAQSFDKLMHSPTGRSVFRAFLRTEYSEENMLFWLACEELKTEADRHVVDEKARLIYEDYVSILSPKEVSLDSRVREGINRKMQEPSPHTFDDAQLQIYTLMHRDSYPRFLTSPTYRSLLLQGAPQSSEA.

Residues 1–19 (MPTPHEAEKQHTGPEEADR) are compositionally biased toward basic and acidic residues. The tract at residues 1-30 (MPTPHEAEKQHTGPEEADRPPSMSSHDAAP) is disordered. Phosphoserine; by CK2 is present on serine 24. Positions 90–206 (SFDKLMHSPT…LTSPTYRSLL (117 aa)) constitute an RGS domain. Phosphoserine is present on serine 97. Serine 151 carries the post-translational modification Phosphoserine; by MAPK1 and MAPK3. The tract at residues 207–216 (LQGAPQSSEA) is interaction with GIPC.

Interacts with GIPC PDZ domain. Interacts with GNAO1. In terms of processing, fatty acylated. Heavily palmitoylated in the cysteine string motif. Post-translationally, phosphorylated, mainly on serine residues.

Its subcellular location is the membrane. Its function is as follows. Inhibits signal transduction by increasing the GTPase activity of G protein alpha subunits thereby driving them into their inactive GDP-bound form. Binds to G-alpha subfamily 1 members, predominantly to G(i)-alpha-3. Activity on G(z)-alpha is inhibited by phosphorylation and palmitoylation of the G-protein. This is Regulator of G-protein signaling 19 (Rgs19) from Rattus norvegicus (Rat).